Here is a 445-residue protein sequence, read N- to C-terminus: Histone acetyltransferase of the MYST family 2 (445 aa).

The segment covering 1 to 23 (MGSSANTETNGNAPPPSSNQKPP) has biased composition (polar residues). The interval 1-58 (MGSSANTETNGNAPPPSSNQKPPATNGVDGSHPPPPPLTPDQAIIESDPSKKRKMGML) is disordered. Residues 60–118 (LEVGTRVMCRWRDGKHHPVKVIERRRIHNGGQNDYEYYVHYTEFNRRLDEWTQLDQLDL) form the Tudor-knot domain. The MYST-type HAT domain maps to 169 to 440 (TKVKNISTIE…VDASKLIWTP (272 aa)). Residues 202-227 (LFFCEFCLNFMKRKEQLQRHMRKCDL) form a C2HC MYST-type zinc finger. Position 269 is an N6-acetyllysine; by autocatalysis (Lys269). Acetyl-CoA contacts are provided by residues 312–314 (ILT) and 319–325 (QRKGYGK). The active-site Proton donor/acceptor is the Glu345. Acetyl-CoA is bound at residue Ser349.

It belongs to the MYST (SAS/MOZ) family. In terms of assembly, interacts with MRG1 and MRG2. Post-translationally, autoacetylation at Lys-269 is required for proper function. In terms of tissue distribution, expressed in cotyledons, leaves, stems, roots and, at higher levels in developing flowers, particularly in the anthers and gynoecia. Constitutively expressed in all tissues, predominantly in shoot apical meristem.

Its subcellular location is the nucleus. The enzyme catalyses L-lysyl-[protein] + acetyl-CoA = N(6)-acetyl-L-lysyl-[protein] + CoA + H(+). Its function is as follows. Histone acetyltransferase which may be involved in transcriptional activation. Acetylates 'Lys-5' of histone H4 (H4K5ac). Essential for gametophyte development. Negative regulator of flowering controlling the H4K5ac levels in the FLC chromatin. This chain is Histone acetyltransferase of the MYST family 2, found in Arabidopsis thaliana (Mouse-ear cress).